We begin with the raw amino-acid sequence, 446 residues long: tRNA-2-methylthio-N(6)-dimethylallyladenosine synthase (446 aa).

The region spanning 5 to 121 (KYLYVETFGC…LPEIVRAAER (117 aa)) is the MTTase N-terminal domain. [4Fe-4S] cluster-binding residues include Cys14, Cys50, Cys84, Cys159, Cys163, and Cys166. Residues 145 to 375 (GEGGVTRFVT…QTLQQQMKRE (231 aa)) enclose the Radical SAM core domain. The TRAM domain occupies 378 to 440 (ISFVGTRQLV…QNSLLGEIVT (63 aa)).

It belongs to the methylthiotransferase family. MiaB subfamily. As to quaternary structure, monomer. Requires [4Fe-4S] cluster as cofactor.

The protein localises to the cytoplasm. It catalyses the reaction N(6)-dimethylallyladenosine(37) in tRNA + (sulfur carrier)-SH + AH2 + 2 S-adenosyl-L-methionine = 2-methylsulfanyl-N(6)-dimethylallyladenosine(37) in tRNA + (sulfur carrier)-H + 5'-deoxyadenosine + L-methionine + A + S-adenosyl-L-homocysteine + 2 H(+). Functionally, catalyzes the methylthiolation of N6-(dimethylallyl)adenosine (i(6)A), leading to the formation of 2-methylthio-N6-(dimethylallyl)adenosine (ms(2)i(6)A) at position 37 in tRNAs that read codons beginning with uridine. The protein is tRNA-2-methylthio-N(6)-dimethylallyladenosine synthase of Geobacter sulfurreducens (strain ATCC 51573 / DSM 12127 / PCA).